The chain runs to 469 residues: Sulfate adenylyltransferase subunit 1 (469 aa).

The tr-type G domain maps to 22-236 (KDMLRVLTCG…LLNTVSVEQD (215 aa)). The interval 31-38 (GSVDDGKS) is G1. 31–38 (GSVDDGKS) contacts GTP. A G2 region spans residues 89-93 (GITID). The tract at residues 110–113 (DTPG) is G3. GTP contacts are provided by residues 110-114 (DTPGH) and 165-168 (NKMD). A G4 region spans residues 165-168 (NKMD). The interval 202-204 (SAL) is G5.

Belongs to the TRAFAC class translation factor GTPase superfamily. Classic translation factor GTPase family. CysN/NodQ subfamily. In terms of assembly, heterodimer composed of CysD, the smaller subunit, and CysN.

It carries out the reaction sulfate + ATP + H(+) = adenosine 5'-phosphosulfate + diphosphate. The protein operates within sulfur metabolism; hydrogen sulfide biosynthesis; sulfite from sulfate: step 1/3. In terms of biological role, with CysD forms the ATP sulfurylase (ATPS) that catalyzes the adenylation of sulfate producing adenosine 5'-phosphosulfate (APS) and diphosphate, the first enzymatic step in sulfur assimilation pathway. APS synthesis involves the formation of a high-energy phosphoric-sulfuric acid anhydride bond driven by GTP hydrolysis by CysN coupled to ATP hydrolysis by CysD. In Shewanella woodyi (strain ATCC 51908 / MS32), this protein is Sulfate adenylyltransferase subunit 1.